Consider the following 187-residue polypeptide: Holliday junction branch migration complex subunit RuvA (187 aa).

The domain I stretch occupies residues M1–K64. Residues R65 to V136 are domain II. Residues V136–P139 form a flexible linker region. The tract at residues K140–K187 is domain III.

Belongs to the RuvA family. As to quaternary structure, homotetramer. Forms an RuvA(8)-RuvB(12)-Holliday junction (HJ) complex. HJ DNA is sandwiched between 2 RuvA tetramers; dsDNA enters through RuvA and exits via RuvB. An RuvB hexamer assembles on each DNA strand where it exits the tetramer. Each RuvB hexamer is contacted by two RuvA subunits (via domain III) on 2 adjacent RuvB subunits; this complex drives branch migration. In the full resolvosome a probable DNA-RuvA(4)-RuvB(12)-RuvC(2) complex forms which resolves the HJ.

It is found in the cytoplasm. Functionally, the RuvA-RuvB-RuvC complex processes Holliday junction (HJ) DNA during genetic recombination and DNA repair, while the RuvA-RuvB complex plays an important role in the rescue of blocked DNA replication forks via replication fork reversal (RFR). RuvA specifically binds to HJ cruciform DNA, conferring on it an open structure. The RuvB hexamer acts as an ATP-dependent pump, pulling dsDNA into and through the RuvAB complex. HJ branch migration allows RuvC to scan DNA until it finds its consensus sequence, where it cleaves and resolves the cruciform DNA. In Caldanaerobacter subterraneus subsp. tengcongensis (strain DSM 15242 / JCM 11007 / NBRC 100824 / MB4) (Thermoanaerobacter tengcongensis), this protein is Holliday junction branch migration complex subunit RuvA.